A 238-amino-acid polypeptide reads, in one-letter code: MTIPAYKRILLKLSGEALMGDDSYGINRDVIERIVAEIAEVNQLGVEVAVVIGGGNIFRGMTSSAEGMDRATADYMGMLATVMNALALQDAMRRAGLVSRVQSALRIDQVVEPYIRGKAIRYLEEGKIVIFAAGTGNPFFTTDTAAALRGMEMNVDIVLKATKVDGVYTTDPKINPDAERYQRLSFDTAIAENLKVMDATALTLCRDQKLPLKVFSIFKAEALRRVVMGEEEGTLVEV.

12–15 (KLSG) serves as a coordination point for ATP. G54 serves as a coordination point for UMP. Positions 55 and 59 each coordinate ATP. Residues D74 and 135–142 (TGNPFFTT) each bind UMP. Residues T162, Y168, and D171 each coordinate ATP.

This sequence belongs to the UMP kinase family. As to quaternary structure, homohexamer.

Its subcellular location is the cytoplasm. It catalyses the reaction UMP + ATP = UDP + ADP. It functions in the pathway pyrimidine metabolism; CTP biosynthesis via de novo pathway; UDP from UMP (UMPK route): step 1/1. Inhibited by UTP. Catalyzes the reversible phosphorylation of UMP to UDP. The polypeptide is Uridylate kinase (Nitrosospira multiformis (strain ATCC 25196 / NCIMB 11849 / C 71)).